The chain runs to 559 residues: CCR4-NOT transcription complex subunit 6-like (559 aa).

Residues 1–148 (MPKEKYDPPD…LYQEPDGTRK (148 aa)) form a required for interaction with cnot1, cnot3 and cnot7 region. Residues 1–550 (MPKEKYDPPD…NGLHLPVHST (550 aa)) are nuclease domain. LRR repeat units follow at residues 52-73 (HLTA…IAKL), 75-96 (HLVY…LGNM), 98-120 (TLRE…GRLF), and 121-143 (QLQT…YQEP). Glu235 is a Mg(2+) binding site. The substrate site is built by Glu235, Glu271, His353, and Pro358. Asp405 is a binding site for Mg(2+). The active-site Proton donor/acceptor is Asp405. Residues Asn407, Asn474, and Phe479 each contribute to the substrate site.

The protein belongs to the CCR4/nocturin family. In terms of assembly, component of the CCR4-NOT complex. The cofactor is Mg(2+).

The protein localises to the cytoplasm. Its subcellular location is the nucleus. It catalyses the reaction Exonucleolytic cleavage of poly(A) to 5'-AMP.. Poly(A) nuclease with 3'-5' RNase activity. Catalytic component of the CCR4-NOT complex which is one of the major cellular mRNA deadenylases and is linked to various cellular processes including bulk mRNA degradation, miRNA-mediated repression, translational repression during translational initiation and general transcription regulation. Additional complex functions may be a consequence of its influence on mRNA expression. This is CCR4-NOT transcription complex subunit 6-like (cnot6l) from Danio rerio (Zebrafish).